The primary structure comprises 30 residues: Cyclotide hyen-C (30 aa).

Residues 1-30 (GTHPCQETCVTSTRCSTQGCHCNWPICFKN) constitute a cross-link (cyclopeptide (Gly-Asn)). Disulfide bonds link cysteine 5–cysteine 20, cysteine 9–cysteine 22, and cysteine 15–cysteine 27.

Post-translationally, this is a cyclic peptide. In terms of tissue distribution, detected in stems (at protein level).

Its function is as follows. Probably participates in a plant defense mechanism. Does not display any cytotoxic activity towards K562, HeLa, MCF-7, HUVEC or red blood cells. Does not bind to phospholipd membranes containing 1-palmitoyl 2-oleoyl phosphatidylcholine (POPC) or 1-palmitoyl-2-oleophosphatidylethanolamine (POPE). This Pigea enneasperma (Spade flower) protein is Cyclotide hyen-C.